Consider the following 316-residue polypeptide: Lipoyl synthase (316 aa).

[4Fe-4S] cluster-binding residues include cysteine 66, cysteine 71, cysteine 77, cysteine 92, cysteine 96, cysteine 99, and serine 306. The Radical SAM core domain maps to 78-295 (FNRGTATFMI…NLIAFDLGFK (218 aa)).

Belongs to the radical SAM superfamily. Lipoyl synthase family. [4Fe-4S] cluster is required as a cofactor.

It localises to the cytoplasm. The catalysed reaction is [[Fe-S] cluster scaffold protein carrying a second [4Fe-4S](2+) cluster] + N(6)-octanoyl-L-lysyl-[protein] + 2 oxidized [2Fe-2S]-[ferredoxin] + 2 S-adenosyl-L-methionine + 4 H(+) = [[Fe-S] cluster scaffold protein] + N(6)-[(R)-dihydrolipoyl]-L-lysyl-[protein] + 4 Fe(3+) + 2 hydrogen sulfide + 2 5'-deoxyadenosine + 2 L-methionine + 2 reduced [2Fe-2S]-[ferredoxin]. Its pathway is protein modification; protein lipoylation via endogenous pathway; protein N(6)-(lipoyl)lysine from octanoyl-[acyl-carrier-protein]: step 2/2. Catalyzes the radical-mediated insertion of two sulfur atoms into the C-6 and C-8 positions of the octanoyl moiety bound to the lipoyl domains of lipoate-dependent enzymes, thereby converting the octanoylated domains into lipoylated derivatives. This Wigglesworthia glossinidia brevipalpis protein is Lipoyl synthase.